The sequence spans 314 residues: 4-hydroxy-3-methylbut-2-enyl diphosphate reductase (314 aa).

Residue Cys-12 participates in [4Fe-4S] cluster binding. Residues His-43 and His-81 each contribute to the (2E)-4-hydroxy-3-methylbut-2-enyl diphosphate site. Dimethylallyl diphosphate contacts are provided by His-43 and His-81. Positions 43 and 81 each coordinate isopentenyl diphosphate. Cys-103 is a binding site for [4Fe-4S] cluster. His-131 contributes to the (2E)-4-hydroxy-3-methylbut-2-enyl diphosphate binding site. Residue His-131 participates in dimethylallyl diphosphate binding. Isopentenyl diphosphate is bound at residue His-131. Glu-133 serves as the catalytic Proton donor. Position 170 (Thr-170) interacts with (2E)-4-hydroxy-3-methylbut-2-enyl diphosphate. Cys-198 lines the [4Fe-4S] cluster pocket. (2E)-4-hydroxy-3-methylbut-2-enyl diphosphate-binding residues include Ser-226, Asn-228, and Ser-271. Residues Ser-226, Asn-228, and Ser-271 each contribute to the dimethylallyl diphosphate site. 3 residues coordinate isopentenyl diphosphate: Ser-226, Asn-228, and Ser-271.

It belongs to the IspH family. [4Fe-4S] cluster serves as cofactor.

It carries out the reaction isopentenyl diphosphate + 2 oxidized [2Fe-2S]-[ferredoxin] + H2O = (2E)-4-hydroxy-3-methylbut-2-enyl diphosphate + 2 reduced [2Fe-2S]-[ferredoxin] + 2 H(+). The catalysed reaction is dimethylallyl diphosphate + 2 oxidized [2Fe-2S]-[ferredoxin] + H2O = (2E)-4-hydroxy-3-methylbut-2-enyl diphosphate + 2 reduced [2Fe-2S]-[ferredoxin] + 2 H(+). It functions in the pathway isoprenoid biosynthesis; dimethylallyl diphosphate biosynthesis; dimethylallyl diphosphate from (2E)-4-hydroxy-3-methylbutenyl diphosphate: step 1/1. The protein operates within isoprenoid biosynthesis; isopentenyl diphosphate biosynthesis via DXP pathway; isopentenyl diphosphate from 1-deoxy-D-xylulose 5-phosphate: step 6/6. In terms of biological role, catalyzes the conversion of 1-hydroxy-2-methyl-2-(E)-butenyl 4-diphosphate (HMBPP) into a mixture of isopentenyl diphosphate (IPP) and dimethylallyl diphosphate (DMAPP). Acts in the terminal step of the DOXP/MEP pathway for isoprenoid precursor biosynthesis. This Shouchella clausii (strain KSM-K16) (Alkalihalobacillus clausii) protein is 4-hydroxy-3-methylbut-2-enyl diphosphate reductase.